Consider the following 75-residue polypeptide: UPF0270 protein Pfl01_4103 (75 aa).

Belongs to the UPF0270 family.

The sequence is that of UPF0270 protein Pfl01_4103 from Pseudomonas fluorescens (strain Pf0-1).